The primary structure comprises 208 residues: Guanylate kinase (208 aa).

The Guanylate kinase-like domain occupies 5-184; that stretch reads GLLIVFSGPS…AAERVKCVIE (180 aa). 12–19 is an ATP binding site; the sequence is GPSGVGKG.

Belongs to the guanylate kinase family.

It is found in the cytoplasm. It carries out the reaction GMP + ATP = GDP + ADP. In terms of biological role, essential for recycling GMP and indirectly, cGMP. This Streptococcus pneumoniae serotype 4 (strain ATCC BAA-334 / TIGR4) protein is Guanylate kinase.